The sequence spans 314 residues: FHA domain-containing protein DDL (314 aa).

The segment covering 1–10 (MAPSSRSPSP) has biased composition (low complexity). A disordered region spans residues 1–146 (MAPSSRSPSP…NVEEDSVARM (146 aa)). Residues 18–127 (ARGEKEIGRS…AIASRHDEGS (110 aa)) show a composition bias toward basic and acidic residues. A Phosphoserine modification is found at Ser-133. The region spanning 219–282 (YLFGRERRIA…NKTYINESPI (64 aa)) is the FHA domain.

As to quaternary structure, interacts with DCL1 (via N-terminus). As to expression, expressed in roots, lateral roots, vascular strands of roots and leaves, vegetative meristems, pollen and developing seeds.

Its subcellular location is the nucleus. Functionally, involved in the microRNA (miRNA) and short interfering RNA (siRNA) biogenesis. May facilitate DCL1 to access or recognize primary miRNAs. Binds RNA non-specifically. This chain is FHA domain-containing protein DDL (DDL), found in Arabidopsis thaliana (Mouse-ear cress).